We begin with the raw amino-acid sequence, 332 residues long: uncharacterized protein (332 aa).

2 stretches are compositionally biased toward acidic residues: residues glutamate 290–glycine 314 and glutamate 323–glutamate 332. Residues glutamate 290 to glutamate 332 are disordered.

Belongs to the mimivirus L17x/L18x family.

This is an uncharacterized protein from Acanthamoeba polyphaga mimivirus (APMV).